We begin with the raw amino-acid sequence, 179 residues long: Probable F-box protein At3g25550 (179 aa).

The F-box domain occupies 19 to 55 (IPNDDVLEEIIVRLPVKTLTRFQTVSKHWRHTIKSRN).

This is Probable F-box protein At3g25550 from Arabidopsis thaliana (Mouse-ear cress).